Consider the following 255-residue polypeptide: 5-oxoprolinase subunit A (255 aa).

Belongs to the LamB/PxpA family. Forms a complex composed of PxpA, PxpB and PxpC.

It catalyses the reaction 5-oxo-L-proline + ATP + 2 H2O = L-glutamate + ADP + phosphate + H(+). Its function is as follows. Catalyzes the cleavage of 5-oxoproline to form L-glutamate coupled to the hydrolysis of ATP to ADP and inorganic phosphate. This chain is 5-oxoprolinase subunit A, found in Corynebacterium efficiens (strain DSM 44549 / YS-314 / AJ 12310 / JCM 11189 / NBRC 100395).